Consider the following 120-residue polypeptide: Ig heavy chain V region 36-65 (120 aa).

The Ig-like domain maps to 1–111 (VQLQQSGAEL…GGSYYFDYWG (111 aa)).

The protein is Ig heavy chain V region 36-65 of Mus musculus (Mouse).